The primary structure comprises 130 residues: Osteocrin (130 aa).

Residues 1-25 (MLDWRLASTHFILAMIVMLWGSGKA) form the signal peptide. Arg129 carries the arginine amide modification.

This sequence belongs to the Osteocrin family. In terms of assembly, interacts with NPR3. Expressed in skeletal muscle and to a much lesser extent in bone, brown adipose tissue, spleen and testis. Not expressed in neurons.

The protein resides in the secreted. Its function is as follows. Hormone that acts as a ligand for natriuretic peptide receptor NPR3/NPR-C and promotes bone growth and physical endurance in muscle. Acts as a regulator of osteoblast differentiation and bone growth by binding to natriuretic peptide receptor NPR3/NPR-C, thereby preventing binding between NPR3/NPR-C and natriuretic peptides, leading to increase cGMP production. Required to enhance physical endurance: induced following physical exercise in muscle and promotes cGMP production, probably by interacting with NPR3/NPR-C. May act as an autocrine and paracrine factor linked to glucose metabolism in skeletal muscle. This Mus musculus (Mouse) protein is Osteocrin.